A 333-amino-acid chain; its full sequence is Adenosine deaminase (333 aa).

Positions 12 and 14 each coordinate Zn(2+). Positions 14, 16, and 170 each coordinate substrate. His-197 is a binding site for Zn(2+). Glu-200 serves as the catalytic Proton donor. Zn(2+) is bound at residue Asp-278. Asp-279 serves as a coordination point for substrate.

Belongs to the metallo-dependent hydrolases superfamily. Adenosine and AMP deaminases family. Adenosine deaminase subfamily. Zn(2+) is required as a cofactor.

The catalysed reaction is adenosine + H2O + H(+) = inosine + NH4(+). The enzyme catalyses 2'-deoxyadenosine + H2O + H(+) = 2'-deoxyinosine + NH4(+). Catalyzes the hydrolytic deamination of adenosine and 2-deoxyadenosine. The polypeptide is Adenosine deaminase (Aliivibrio fischeri (strain ATCC 700601 / ES114) (Vibrio fischeri)).